The following is an 808-amino-acid chain: Protein translocase subunit SecA 2 (808 aa).

Residues Q124, 142–146 (GEGKT), and D535 each bind ATP.

This sequence belongs to the SecA family. As to quaternary structure, monomer and homodimer. Part of the essential Sec protein translocation apparatus which comprises SecA, SecYEG and auxiliary proteins SecDF. Other proteins may also be involved.

It is found in the cell membrane. It localises to the cytoplasm. It carries out the reaction ATP + H2O + cellular proteinSide 1 = ADP + phosphate + cellular proteinSide 2.. Functionally, part of the Sec protein translocase complex. Interacts with the SecYEG preprotein conducting channel. Has a central role in coupling the hydrolysis of ATP to the transfer of proteins into and across the cell membrane, serving as an ATP-driven molecular motor driving the stepwise translocation of polypeptide chains across the membrane. In Mycobacterium bovis (strain BCG / Pasteur 1173P2), this protein is Protein translocase subunit SecA 2.